We begin with the raw amino-acid sequence, 138 residues long: MTAIFLMSVLFGLACGQAMSFCIPTEYMMHVERKECAYCLTINTTICAGYCMTRDFNGKLFLPKFALSQDVCTYRDFMYKTVEIPGCPHHVTPYFSYPVAVSCKCGKCDTDYSDCIQEAVKMNYCTKPQKPHVVGLSI.

Residues 1–20 form the signal peptide; it reads MTAIFLMSVLFGLACGQAMS. Disulfide bonds link cysteine 22–cysteine 72, cysteine 36–cysteine 87, cysteine 39–cysteine 125, cysteine 47–cysteine 103, cysteine 51–cysteine 105, and cysteine 108–cysteine 115. An N-linked (GlcNAc...) asparagine glycan is attached at asparagine 43. Positions 133–138 are excised as a propeptide; that stretch reads VVGLSI.

This sequence belongs to the glycoprotein hormones subunit beta family. As to quaternary structure, heterodimer of a common alpha chain and a unique beta chain which confers biological specificity to thyrotropin, lutropin, follitropin and gonadotropin.

It localises to the secreted. Functionally, indispensable for the control of thyroid structure and metabolism. The protein is Thyrotropin subunit beta (TSHB) of Lama glama (Llama).